We begin with the raw amino-acid sequence, 529 residues long: NAD(P)H-quinone oxidoreductase chain 4 1 (529 aa).

13 consecutive transmembrane segments (helical) span residues 4-24 (FPWL…IPFI), 36-56 (WYAL…FTNF), 91-111 (LILL…PVTL), 115-135 (LFYF…AVQD), 137-157 (LVFF…LAIW), 169-189 (FILY…AMAF), 209-229 (GFQL…LPIV), 243-263 (TAPV…YALI), 277-297 (FAPV…LTSY), 314-334 (IGFV…GAVL), 335-355 (QMVS…ATYD), 387-407 (LALP…GFAT), and 417-437 (VIVV…LLSM).

This sequence belongs to the complex I subunit 4 family.

It localises to the cellular thylakoid membrane. It carries out the reaction a plastoquinone + NADH + (n+1) H(+)(in) = a plastoquinol + NAD(+) + n H(+)(out). The catalysed reaction is a plastoquinone + NADPH + (n+1) H(+)(in) = a plastoquinol + NADP(+) + n H(+)(out). NDH-1 shuttles electrons from NAD(P)H, via FMN and iron-sulfur (Fe-S) centers, to quinones in the respiratory chain. The immediate electron acceptor for the enzyme in this species is believed to be plastoquinone. Couples the redox reaction to proton translocation (for every two electrons transferred, four hydrogen ions are translocated across the cytoplasmic membrane), and thus conserves the redox energy in a proton gradient. The chain is NAD(P)H-quinone oxidoreductase chain 4 1 from Thermosynechococcus vestitus (strain NIES-2133 / IAM M-273 / BP-1).